A 149-amino-acid chain; its full sequence is Epoxide hydrolase EphG (149 aa).

Residue D93 is the Proton donor of the active site. The active-site Proton acceptor is D122.

It belongs to the limonene-1,2-epoxide hydrolase family. In terms of assembly, homodimer. Is also present as monomer in solution.

The catalysed reaction is an epoxide + H2O = an ethanediol. The enzyme catalyses 5,6alpha-epoxy-5alpha-cholestan-3beta-ol + H2O = 5alpha-cholestane-3beta,5,6beta-triol. It carries out the reaction 5,6beta-epoxy-5beta-cholestan-3beta-ol + H2O = 5alpha-cholestane-3beta,5,6beta-triol. Its activity is regulated as follows. Is inhibited by the anti-epileptic drug valpromide (Ki value of about 100 uM). In terms of biological role, epoxide hydrolase capable of hydrolyzing long or bulky lipophilic epoxides such as 9,10-epoxystearic acid and cholesterol 5,6-oxide in vitro. The physiological substrates have yet to be identified, but could be fatty acid or steroid derivatives. In Mycobacterium tuberculosis (strain ATCC 25618 / H37Rv), this protein is Epoxide hydrolase EphG (ephG).